The following is a 404-amino-acid chain: Argininosuccinate synthase (404 aa).

Residues 9–17 (AYSGGLDTS) and Ala36 contribute to the ATP site. Position 87 (Tyr87) interacts with L-citrulline. Gly117 provides a ligand contact to ATP. Residues Thr119, Asn123, and Asp124 each contribute to the L-aspartate site. An L-citrulline-binding site is contributed by Asn123. Positions 127, 176, and 261 each coordinate L-citrulline.

The protein belongs to the argininosuccinate synthase family. Type 1 subfamily. As to quaternary structure, homotetramer.

Its subcellular location is the cytoplasm. The catalysed reaction is L-citrulline + L-aspartate + ATP = 2-(N(omega)-L-arginino)succinate + AMP + diphosphate + H(+). It participates in amino-acid biosynthesis; L-arginine biosynthesis; L-arginine from L-ornithine and carbamoyl phosphate: step 2/3. The chain is Argininosuccinate synthase from Burkholderia pseudomallei (strain K96243).